The chain runs to 442 residues: C4-dicarboxylate transport protein 2 (442 aa).

9 helical membrane passes run 20–39 (QLYV…GHYY), 52–74 (AFIK…TGIA), 89–111 (AMLY…ANVV), 141–158 (VTGF…GAFA), 162–179 (ILQV…LALV), 200–221 (LVSV…FTIG), 231–253 (LAML…LGAV), 342–364 (ILLL…AGFI), and 368–387 (ATLS…ILGV).

This sequence belongs to the dicarboxylate/amino acid:cation symporter (DAACS) (TC 2.A.23) family.

It localises to the cell inner membrane. In terms of biological role, responsible for the transport of dicarboxylates such as succinate, fumarate, and malate from the periplasm across the membrane. This transport system plays an important role in the energy supply of rhizobium-legume symbionts. This is C4-dicarboxylate transport protein 2 (dctA2) from Mesorhizobium japonicum (strain LMG 29417 / CECT 9101 / MAFF 303099) (Mesorhizobium loti (strain MAFF 303099)).